A 501-amino-acid polypeptide reads, in one-letter code: Cytochrome P450 2J1 (501 aa).

A heme-binding site is contributed by Cys-447.

It belongs to the cytochrome P450 family. The cofactor is heme. In terms of tissue distribution, small intestine.

The protein resides in the endoplasmic reticulum membrane. The protein localises to the microsome membrane. The enzyme catalyses an organic molecule + reduced [NADPH--hemoprotein reductase] + O2 = an alcohol + oxidized [NADPH--hemoprotein reductase] + H2O + H(+). Functionally, catalyzes the N-demethylation of benzphetamine to formaldehyde. The sequence is that of Cytochrome P450 2J1 (CYP2J1) from Oryctolagus cuniculus (Rabbit).